Reading from the N-terminus, the 1001-residue chain is O-GlcNAcase NagJ (1001 aa).

A signal peptide spans 1-30; sequence MKRKMLKRLLTSAFACMFIANGLITTTVRA. The interval 179-469 is catalytic domain; sequence VSARGIVEGF…WNRAIDMLYG (291 aa). Positions 180–452 constitute a GH84 domain; the sequence is SARGIVEGFY…TAADYSWNMD (273 aa). G187, K218, and D297 together coordinate a protein. The active-site Proton donor is the D298. Residues Y335, 394-396, D401, and N429 contribute to the a protein site; that span reads WWN. 2 coiled-coil regions span residues 515–543 and 573–597; these read KEDASALIEELYGEFARMEEACNNLKANL and VAQLNEDTEAYESAKEIAQNKLNTA. The region spanning 916-1001 is the Fibronectin type-III domain; the sequence is PVRDFKASEI…KESLTLRTAR (86 aa).

This sequence belongs to the glycosyl hydrolase 84 family.

It carries out the reaction 3-O-(N-acetyl-beta-D-glucosaminyl)-L-seryl-[protein] + H2O = N-acetyl-D-glucosamine + L-seryl-[protein]. It catalyses the reaction 3-O-(N-acetyl-beta-D-glucosaminyl)-L-threonyl-[protein] + H2O = L-threonyl-[protein] + N-acetyl-D-glucosamine. With respect to regulation, inhibited by O-(2-acetamido-2-deoxy-D-glucopyranosylidene)amino-N-phenyl-carbamate (PUGNAc) and streptozotocin. Its function is as follows. Binds carbohydrates. Capable of hydrolyzing the glycosidic link of O-GlcNAcylated proteins. Can bind and deglycosylate O-glycosylated peptides from mammals. The chain is O-GlcNAcase NagJ (nagJ) from Clostridium perfringens (strain ATCC 13124 / DSM 756 / JCM 1290 / NCIMB 6125 / NCTC 8237 / Type A).